Here is a 454-residue protein sequence, read N- to C-terminus: Inactive tetrahydroanabasine acetyltransferase pauper allele (454 aa).

This sequence belongs to the plant acyltransferase family. In terms of assembly, monomer.

This chain is Inactive tetrahydroanabasine acetyltransferase pauper allele, found in Lupinus albus (White lupine).